We begin with the raw amino-acid sequence, 560 residues long: Putative transport protein PBPRA2420 (560 aa).

Transmembrane regions (helical) follow at residues 5–25, 37–57, 66–86, 91–111, and 161–181; these read VASL…AVGL, VGNS…GFTF, FMLF…GIFF, HYLL…LAMT, and SLSV…IFLA. RCK C-terminal domains are found at residues 203 to 292 and 293 to 377; these read RGIG…FRNG and KEVF…IGFI. The next 6 helical transmembrane spans lie at 386–406, 409–429, 452–472, 477–497, 506–526, and 539–559; these read LLAF…TLAF, VAFG…LGFL, LMVF…DSFA, MVLV…YLFG, ALLF…DMIN, and AGTY…IIIM.

The protein belongs to the AAE transporter (TC 2.A.81) family. YbjL subfamily.

The protein resides in the cell membrane. This chain is Putative transport protein PBPRA2420, found in Photobacterium profundum (strain SS9).